We begin with the raw amino-acid sequence, 364 residues long: tRNA 2-selenouridine synthase (364 aa).

One can recognise a Rhodanese domain in the interval leucine 14–isoleucine 137. Cysteine 97 functions as the S-selanylcysteine intermediate in the catalytic mechanism.

This sequence belongs to the SelU family. As to quaternary structure, monomer.

The catalysed reaction is 5-methylaminomethyl-2-thiouridine(34) in tRNA + selenophosphate + (2E)-geranyl diphosphate + H2O + H(+) = 5-methylaminomethyl-2-selenouridine(34) in tRNA + (2E)-thiogeraniol + phosphate + diphosphate. It catalyses the reaction 5-methylaminomethyl-2-thiouridine(34) in tRNA + (2E)-geranyl diphosphate = 5-methylaminomethyl-S-(2E)-geranyl-thiouridine(34) in tRNA + diphosphate. The enzyme catalyses 5-methylaminomethyl-S-(2E)-geranyl-thiouridine(34) in tRNA + selenophosphate + H(+) = 5-methylaminomethyl-2-(Se-phospho)selenouridine(34) in tRNA + (2E)-thiogeraniol. It carries out the reaction 5-methylaminomethyl-2-(Se-phospho)selenouridine(34) in tRNA + H2O = 5-methylaminomethyl-2-selenouridine(34) in tRNA + phosphate. In terms of biological role, involved in the post-transcriptional modification of the uridine at the wobble position (U34) of tRNA(Lys), tRNA(Glu) and tRNA(Gln). Catalyzes the conversion of 2-thiouridine (S2U-RNA) to 2-selenouridine (Se2U-RNA). Acts in a two-step process involving geranylation of 2-thiouridine (S2U) to S-geranyl-2-thiouridine (geS2U) and subsequent selenation of the latter derivative to 2-selenouridine (Se2U) in the tRNA chain. The protein is tRNA 2-selenouridine synthase of Shigella dysenteriae serotype 1 (strain Sd197).